Reading from the N-terminus, the 163-residue chain is uncharacterized protein (163 aa).

4Fe-4S ferredoxin-type domains follow at residues 30–59 (REII…YSSD), 61–90 (LYIT…IIRL), 105–136 (KYEF…EYGS), and 136–163 (SKIR…IILR). [4Fe-4S] cluster is bound by residues Cys-39, Cys-42, Cys-45, Cys-49, Cys-70, Cys-73, Cys-76, Cys-80, Cys-116, Cys-119, Cys-122, Cys-126, Cys-145, Cys-148, Cys-151, and Cys-155.

This is an uncharacterized protein from Methanocaldococcus jannaschii (strain ATCC 43067 / DSM 2661 / JAL-1 / JCM 10045 / NBRC 100440) (Methanococcus jannaschii).